A 135-amino-acid chain; its full sequence is Large ribosomal subunit protein eL32 (135 aa).

Belongs to the eukaryotic ribosomal protein eL32 family. As to quaternary structure, component of the large ribosomal subunit.

The protein resides in the cytoplasm. Its function is as follows. Component of the large ribosomal subunit. The ribosome is a large ribonucleoprotein complex responsible for the synthesis of proteins in the cell. The sequence is that of Large ribosomal subunit protein eL32 (rpl32) from Ictalurus punctatus (Channel catfish).